Consider the following 420-residue polypeptide: 3-isopropylmalate dehydratase large subunit (420 aa).

The [4Fe-4S] cluster site is built by C301, C361, and C364.

Belongs to the aconitase/IPM isomerase family. LeuC type 2 subfamily. Heterodimer of LeuC and LeuD. The cofactor is [4Fe-4S] cluster.

The enzyme catalyses (2R,3S)-3-isopropylmalate = (2S)-2-isopropylmalate. The protein operates within amino-acid biosynthesis; L-leucine biosynthesis; L-leucine from 3-methyl-2-oxobutanoate: step 2/4. Functionally, catalyzes the isomerization between 2-isopropylmalate and 3-isopropylmalate, via the formation of 2-isopropylmaleate. In Desulfovibrio desulfuricans (strain ATCC 27774 / DSM 6949 / MB), this protein is 3-isopropylmalate dehydratase large subunit.